The chain runs to 294 residues: UPF0761 membrane protein YPK_4186 (294 aa).

The next 7 helical transmembrane spans lie at 44–64 (LLSL…FPMF), 67–87 (ISIK…GDII), 108–128 (GLIV…NIIW), 136–156 (LVFS…LVGA), 185–205 (VFPL…VPTV), 212–232 (ALIG…GFAM), and 246–266 (VLAV…IVLL).

Belongs to the UPF0761 family.

Its subcellular location is the cell inner membrane. This Yersinia pseudotuberculosis serotype O:3 (strain YPIII) protein is UPF0761 membrane protein YPK_4186.